Consider the following 278-residue polypeptide: Putative B3 domain-containing protein At2g21920 (278 aa).

A DNA-binding region (TF-B3) is located at residues 168–275; that stretch reads ISKTLSRTDV…KFIILNFEYN (108 aa).

It localises to the nucleus. This Arabidopsis thaliana (Mouse-ear cress) protein is Putative B3 domain-containing protein At2g21920.